Here is a 143-residue protein sequence, read N- to C-terminus: Rheacalcin-2 (143 aa).

Disulfide bonds link Cys6-Cys17, Cys34-Cys139, and Cys114-Cys131. The region spanning 13 to 140 is the C-type lectin domain; that stretch reads FDGRCFGFFP…CSDRKPFICE (128 aa). Residues Ser66 and Ser68 each carry the phosphoserine modification.

It localises to the secreted. It is found in the extracellular space. The protein resides in the extracellular matrix. The polypeptide is Rheacalcin-2 (Rhea americana (Greater rhea)).